The sequence spans 148 residues: Large ribosomal subunit protein uL16 (148 aa).

The protein belongs to the universal ribosomal protein uL16 family. As to quaternary structure, part of the 50S ribosomal subunit.

In terms of biological role, binds 23S rRNA and is also seen to make contacts with the A and possibly P site tRNAs. The polypeptide is Large ribosomal subunit protein uL16 (Gloeobacter violaceus (strain ATCC 29082 / PCC 7421)).